Consider the following 464-residue polypeptide: Trigger factor (464 aa).

In terms of domain architecture, PPIase FKBP-type spans 162 to 243; the sequence is GDFISIDLSA…VGTVKERELP (82 aa). Residues 435–464 are disordered; it reads ELFGNGEAETEEAASTDEAASDSTESEDQK.

The protein belongs to the FKBP-type PPIase family. Tig subfamily.

It is found in the cytoplasm. The enzyme catalyses [protein]-peptidylproline (omega=180) = [protein]-peptidylproline (omega=0). In terms of biological role, involved in protein export. Acts as a chaperone by maintaining the newly synthesized protein in an open conformation. Functions as a peptidyl-prolyl cis-trans isomerase. The sequence is that of Trigger factor from Rhodococcus jostii (strain RHA1).